We begin with the raw amino-acid sequence, 158 residues long: 6,7-dimethyl-8-ribityllumazine synthase (158 aa).

5-amino-6-(D-ribitylamino)uracil-binding positions include phenylalanine 23, 61 to 63, and 85 to 87; these read SFE and AVI. Residue 90 to 91 participates in (2S)-2-hydroxy-3-oxobutyl phosphate binding; sequence DT. Residue histidine 93 is the Proton donor of the active site. Phenylalanine 118 is a binding site for 5-amino-6-(D-ribitylamino)uracil. Arginine 132 is a binding site for (2S)-2-hydroxy-3-oxobutyl phosphate.

Belongs to the DMRL synthase family.

The catalysed reaction is (2S)-2-hydroxy-3-oxobutyl phosphate + 5-amino-6-(D-ribitylamino)uracil = 6,7-dimethyl-8-(1-D-ribityl)lumazine + phosphate + 2 H2O + H(+). It participates in cofactor biosynthesis; riboflavin biosynthesis; riboflavin from 2-hydroxy-3-oxobutyl phosphate and 5-amino-6-(D-ribitylamino)uracil: step 1/2. Functionally, catalyzes the formation of 6,7-dimethyl-8-ribityllumazine by condensation of 5-amino-6-(D-ribitylamino)uracil with 3,4-dihydroxy-2-butanone 4-phosphate. This is the penultimate step in the biosynthesis of riboflavin. The chain is 6,7-dimethyl-8-ribityllumazine synthase from Prochlorococcus marinus (strain NATL1A).